Reading from the N-terminus, the 371-residue chain is Protein SPATA31F3 (371 aa).

The chain crosses the membrane as a helical span at residues 7 to 29; sequence ILWDVGSSVYTYGSLFIIALIIW. Residues 62–86 are a coiled coil; that stretch reads LRVKKRTTKEETEKLQKLLSNMKRQ. 2 stretches are compositionally biased toward polar residues: residues 189–203 and 244–266; these read LSKV…LSSQ and PQQQ…SSSS. Disordered regions lie at residues 189 to 222, 240 to 299, and 326 to 371; these read LSKV…STDQ, YHPA…EAEM, and YKSE…KRNI. Phosphoserine is present on residues Ser197 and Ser198. The segment covering 277-287 has biased composition (basic residues); it reads QKKRKKTKKLV. Residues 330-362 show a composition bias toward basic and acidic residues; sequence TGAKPKTGEPKKSSAKVRAEEPNLEKHAKDLKA.

This sequence belongs to the SPATA31 family.

The protein localises to the membrane. This chain is Protein SPATA31F3 (Spata31f3), found in Mus musculus (Mouse).